Consider the following 714-residue polypeptide: Putative glutamine--fructose-6-phosphate aminotransferase [isomerizing] (714 aa).

Cysteine 2 serves as the catalytic Nucleophile; for GATase activity. One can recognise a Glutamine amidotransferase type-2 domain in the interval cysteine 2–glycine 321. A compositionally biased stretch (polar residues) spans serine 266 to proline 280. The tract at residues serine 266–leucine 285 is disordered. 2 SIS domains span residues tryptophan 387 to serine 526 and cysteine 559 to proline 704.

The enzyme catalyses D-fructose 6-phosphate + L-glutamine = D-glucosamine 6-phosphate + L-glutamate. Its pathway is nucleotide-sugar biosynthesis; UDP-N-acetyl-alpha-D-glucosamine biosynthesis; alpha-D-glucosamine 6-phosphate from D-fructose 6-phosphate: step 1/1. Functionally, involved in amino sugar synthesis (formation of chitin, supplies the amino sugars of asparagine-linked oligosaccharides of glycoproteins). The polypeptide is Putative glutamine--fructose-6-phosphate aminotransferase [isomerizing] (Saccharomyces cerevisiae (strain YJM789) (Baker's yeast)).